The chain runs to 260 residues: Snake venom serine protease homolog (260 aa).

Residues 1–18 (MVLVRVLANLLMLQLSYA) form the signal peptide. Positions 19 to 24 (QKSSEL) are excised as a propeptide. In terms of domain architecture, Peptidase S1 spans 25-251 (IIGGDECNIN…HLDWIKSIIA (227 aa)). Disulfide bonds link Cys31–Cys165, Cys52–Cys68, Cys100–Cys258, Cys144–Cys212, Cys176–Cys191, and Cys202–Cys227. Asp112 acts as the Charge relay system in catalysis. 2 N-linked (GlcNAc...) asparagine glycosylation sites follow: Asn123 and Asn124. Catalysis depends on Ser206, which acts as the Charge relay system.

This sequence belongs to the peptidase S1 family. Snake venom subfamily. As to expression, expressed by the venom gland.

It localises to the secreted. Snake venom serine protease homolog. May act in the hemostasis system of the prey. The sequence is that of Snake venom serine protease homolog from Protobothrops jerdonii (Jerdon's pitviper).